Consider the following 165-residue polypeptide: Large ribosomal subunit protein uL10 (165 aa).

Belongs to the universal ribosomal protein uL10 family. In terms of assembly, part of the ribosomal stalk of the 50S ribosomal subunit. The N-terminus interacts with L11 and the large rRNA to form the base of the stalk. The C-terminus forms an elongated spine to which L12 dimers bind in a sequential fashion forming a multimeric L10(L12)X complex.

In terms of biological role, forms part of the ribosomal stalk, playing a central role in the interaction of the ribosome with GTP-bound translation factors. The sequence is that of Large ribosomal subunit protein uL10 from Serratia proteamaculans (strain 568).